The following is a 117-amino-acid chain: Phosphoribosyl-ATP pyrophosphatase (117 aa).

Belongs to the PRA-PH family.

The protein resides in the cytoplasm. It carries out the reaction 1-(5-phospho-beta-D-ribosyl)-ATP + H2O = 1-(5-phospho-beta-D-ribosyl)-5'-AMP + diphosphate + H(+). It participates in amino-acid biosynthesis; L-histidine biosynthesis; L-histidine from 5-phospho-alpha-D-ribose 1-diphosphate: step 2/9. The polypeptide is Phosphoribosyl-ATP pyrophosphatase (Rhodospirillum rubrum (strain ATCC 11170 / ATH 1.1.1 / DSM 467 / LMG 4362 / NCIMB 8255 / S1)).